The following is a 309-amino-acid chain: Cytochrome c biogenesis protein CcsA (309 aa).

8 consecutive transmembrane segments (helical) span residues 18–38, 43–63, 67–87, 102–122, 148–168, 216–236, 250–267, and 279–299; these read LGLL…GAFF, FFIV…QLLF, ISGH…TWGI, IIPS…CFVL, VMLS…VLFI, SILI…VWAN, TWAF…HMRI, and LATT…FLGI.

This sequence belongs to the CcmF/CycK/Ccl1/NrfE/CcsA family. As to quaternary structure, may interact with ccs1.

The protein resides in the cellular thylakoid membrane. In terms of biological role, required during biogenesis of c-type cytochromes (cytochrome c6 and cytochrome f) at the step of heme attachment. The polypeptide is Cytochrome c biogenesis protein CcsA (Prochlorococcus marinus (strain MIT 9215)).